The chain runs to 398 residues: Acetate kinase (398 aa).

Position 8 (N8) interacts with Mg(2+). Residue K15 participates in ATP binding. A substrate-binding site is contributed by R89. The Proton donor/acceptor role is filled by D146. ATP-binding positions include 206-210, 283-285, and 331-335; these read HIGNG, DMR, and GMGEN. E383 is a Mg(2+) binding site.

Belongs to the acetokinase family. Homodimer. The cofactor is Mg(2+). It depends on Mn(2+) as a cofactor.

It is found in the cytoplasm. It catalyses the reaction acetate + ATP = acetyl phosphate + ADP. It participates in metabolic intermediate biosynthesis; acetyl-CoA biosynthesis; acetyl-CoA from acetate: step 1/2. Functionally, catalyzes the formation of acetyl phosphate from acetate and ATP. Can also catalyze the reverse reaction. The chain is Acetate kinase from Streptococcus pyogenes serotype M1.